Consider the following 91-residue polypeptide: DNA-directed RNA polymerase subunit omega (91 aa).

Belongs to the RNA polymerase subunit omega family. The RNAP catalytic core consists of 2 alpha, 1 beta, 1 beta' and 1 omega subunit. When a sigma factor is associated with the core the holoenzyme is formed, which can initiate transcription.

The catalysed reaction is RNA(n) + a ribonucleoside 5'-triphosphate = RNA(n+1) + diphosphate. Promotes RNA polymerase assembly. Latches the N- and C-terminal regions of the beta' subunit thereby facilitating its interaction with the beta and alpha subunits. In Serratia proteamaculans (strain 568), this protein is DNA-directed RNA polymerase subunit omega.